The chain runs to 87 residues: U3-theraphotoxin-Hhn1h (87 aa).

The N-terminal stretch at Met-1–Ala-24 is a signal peptide. Residues Ser-25–Arg-52 constitute a propeptide that is removed on maturation. 3 disulfides stabilise this stretch: Cys-54-Cys-67, Cys-61-Cys-72, and Cys-66-Cys-79.

It belongs to the neurotoxin 10 (Hwtx-1) family. 51 (Hntx-8) subfamily. Hntx-8 sub-subfamily. Expressed by the venom gland.

The protein resides in the secreted. In terms of biological role, ion channel inhibitor. The protein is U3-theraphotoxin-Hhn1h of Cyriopagopus hainanus (Chinese bird spider).